The following is a 1237-amino-acid chain: Cilia- and flagella-associated protein 61 (1237 aa).

Residues 278-301 are disordered; that stretch reads QDLSVRRSQDAELRSSSQGSQKIV. Basic and acidic residues predominate over residues 281 to 290; sequence SVRRSQDAEL.

Component of axonemal radial spokes, the protein complexes that link the outer microtubule doublets with the central pair of microtubules. Interacts with CFAP91/MAATS1, ODAD2/ARMC4, RSPH3A, ROPN1, ROPN1L and RSPH9. Interacts with DYNLT1, DYNC1I2 and TUBB3. Interacts with WDR35, IFT22 and IFT81.

It localises to the cytoplasm. Its subcellular location is the cytoskeleton. The protein resides in the flagellum axoneme. In terms of biological role, involved in sperm flagellum assembly. Plays an essential role in the formation of the radial spokes in flagellum axoneme. The sequence is that of Cilia- and flagella-associated protein 61 from Homo sapiens (Human).